The sequence spans 681 residues: DNA ligase (681 aa).

Residues aspartate 35–aspartate 39, serine 84–isoleucine 85, and glutamate 121 contribute to the NAD(+) site. Residue lysine 123 is the N6-AMP-lysine intermediate of the active site. The NAD(+) site is built by arginine 144, glutamate 180, lysine 300, and lysine 324. Zn(2+) is bound by residues cysteine 418, cysteine 421, cysteine 436, and cysteine 442. The region spanning alanine 601–alanine 681 is the BRCT domain.

This sequence belongs to the NAD-dependent DNA ligase family. LigA subfamily. The cofactor is Mg(2+). Mn(2+) is required as a cofactor.

It carries out the reaction NAD(+) + (deoxyribonucleotide)n-3'-hydroxyl + 5'-phospho-(deoxyribonucleotide)m = (deoxyribonucleotide)n+m + AMP + beta-nicotinamide D-nucleotide.. Functionally, DNA ligase that catalyzes the formation of phosphodiester linkages between 5'-phosphoryl and 3'-hydroxyl groups in double-stranded DNA using NAD as a coenzyme and as the energy source for the reaction. It is essential for DNA replication and repair of damaged DNA. The chain is DNA ligase from Aromatoleum aromaticum (strain DSM 19018 / LMG 30748 / EbN1) (Azoarcus sp. (strain EbN1)).